The following is a 297-amino-acid chain: UTP--glucose-1-phosphate uridylyltransferase (297 aa).

It belongs to the UDPGP type 2 family.

The catalysed reaction is alpha-D-glucose 1-phosphate + UTP + H(+) = UDP-alpha-D-glucose + diphosphate. Its pathway is carbohydrate metabolism; nucleotide-sugar metabolism. It functions in the pathway bacterial outer membrane biogenesis; lipopolysaccharide biosynthesis. In terms of biological role, may play a role in stationary phase survival. The polypeptide is UTP--glucose-1-phosphate uridylyltransferase (galF) (Salmonella typhimurium (strain LT2 / SGSC1412 / ATCC 700720)).